The following is a 198-amino-acid chain: Ribonuclease HII (198 aa).

The region spanning 11–198 (NLIAGVDEVG…GPVKRVLGLV (188 aa)) is the RNase H type-2 domain. Residues D17, E18, and D109 each contribute to the a divalent metal cation site.

It belongs to the RNase HII family. Requires Mn(2+) as cofactor. The cofactor is Mg(2+).

Its subcellular location is the cytoplasm. It catalyses the reaction Endonucleolytic cleavage to 5'-phosphomonoester.. Functionally, endonuclease that specifically degrades the RNA of RNA-DNA hybrids. In Yersinia pseudotuberculosis serotype O:3 (strain YPIII), this protein is Ribonuclease HII.